The sequence spans 356 residues: 3-isopropylmalate dehydrogenase (356 aa).

Substrate contacts are provided by arginine 95, arginine 105, arginine 133, and aspartate 223. Residues aspartate 223, aspartate 247, and aspartate 251 each coordinate Mg(2+). 281–293 (GSAPDIAGQNKAN) contacts NAD(+).

Belongs to the isocitrate and isopropylmalate dehydrogenases family. LeuB type 1 subfamily. Homodimer. It depends on Mg(2+) as a cofactor. Requires Mn(2+) as cofactor.

The protein localises to the cytoplasm. It catalyses the reaction (2R,3S)-3-isopropylmalate + NAD(+) = 4-methyl-2-oxopentanoate + CO2 + NADH. Its pathway is amino-acid biosynthesis; L-leucine biosynthesis; L-leucine from 3-methyl-2-oxobutanoate: step 3/4. Its function is as follows. Catalyzes the oxidation of 3-carboxy-2-hydroxy-4-methylpentanoate (3-isopropylmalate) to 3-carboxy-4-methyl-2-oxopentanoate. The product decarboxylates to 4-methyl-2 oxopentanoate. The protein is 3-isopropylmalate dehydrogenase of Neisseria meningitidis serogroup A / serotype 4A (strain DSM 15465 / Z2491).